A 262-amino-acid polypeptide reads, in one-letter code: Fibroin light chain (262 aa).

The first 16 residues, 1–16, serve as a signal peptide directing secretion; it reads MKPIFLVLLVATSAYA. At Ser19 the chain carries N-acetylserine; in short form. Cys101 and Cys160 form a disulfide bridge.

Silk fibroin elementary unit consists in a disulfide-linked heavy and light chain and a p25 glycoprotein in molar ratios of 6:6:1. This results in a complex of approximately 2.3 MDa. Post-translationally, the interchain disulfide bridge is essential for the intracellular transport and secretion of fibroin. Partially N-terminally processed to yield a short form which lacks the first two residues of the long form. Produced exclusively in the posterior (PSG) section of silk glands, which are essentially modified salivary glands.

It is found in the secreted. Its function is as follows. It is likely that the major role of L-chain is to prevent the retention of H-chain in ER by forming the disulfide linkage. This chain is Fibroin light chain (FIBL), found in Bombyx mori (Silk moth).